We begin with the raw amino-acid sequence, 617 residues long: Autophagy-related protein 20 (617 aa).

The tract at residues 1–83 (MWNDEDNNPY…KRKPGGYDSR (83 aa)) is disordered. The segment covering 20–31 (QSSSINPTSPST) has biased composition (low complexity). Basic and acidic residues predominate over residues 48 to 58 (DNEHNHGVIHD). Over residues 59-68 (DSDDDDEDLT) the composition is skewed to acidic residues. The PX domain occupies 89 to 209 (YENPKLSILI…RFFDPNASWS (121 aa)). Residues arginine 126, serine 128, lysine 152, and arginine 175 each coordinate a 1,2-diacyl-sn-glycero-3-phospho-(1D-myo-inositol-3-phosphate). A coiled-coil region spans residues 403-440 (QQDLTTEELSKKRALLDQLEQSEAEARRIENYLSSSQQ). The interval 434 to 516 (YLSSSQQISP…SGNSITNKIF (83 aa)) is disordered. The segment covering 454-463 (PPSHQRRDGS) has biased composition (basic and acidic residues). Residues 480-500 (DFSSHTPSASQGLPERSTSVP) show a composition bias toward polar residues.

This sequence belongs to the sorting nexin family. As to quaternary structure, forms a complex with SNX4/ATG24 and ATG17.

The protein resides in the endosome membrane. Its subcellular location is the preautophagosomal structure membrane. Its function is as follows. Required for cytoplasm to vacuole transport (Cvt), pexophagy and mitophagy. Also involved in endoplasmic reticulum-specific autophagic process and is essential for the survival of cells subjected to severe ER stress. Functions in protein retrieval from the endocytic pathway. Required for proper sorting of the v-SNARE protein SNC1. Autophagy is required for proper vegetative growth, asexual/sexual reproduction, and full virulence. Autophagy is particularly involved in the biosynthesis of deoxynivalenol (DON), an important virulence determinant. In Gibberella zeae (strain ATCC MYA-4620 / CBS 123657 / FGSC 9075 / NRRL 31084 / PH-1) (Wheat head blight fungus), this protein is Autophagy-related protein 20.